The sequence spans 103 residues: Small ribosomal subunit protein uS10 (103 aa).

The protein belongs to the universal ribosomal protein uS10 family. In terms of assembly, part of the 30S ribosomal subunit.

In terms of biological role, involved in the binding of tRNA to the ribosomes. The protein is Small ribosomal subunit protein uS10 of Acidovorax sp. (strain JS42).